We begin with the raw amino-acid sequence, 215 residues long: UPF0502 protein CKO_01995 (215 aa).

The protein belongs to the UPF0502 family.

The chain is UPF0502 protein CKO_01995 from Citrobacter koseri (strain ATCC BAA-895 / CDC 4225-83 / SGSC4696).